A 51-amino-acid chain; its full sequence is QKLCQRPSGTWSGVCGNNNACRNQCINLEKARHGSCNYVFPAHKCICYFPC.

At Gln1 the chain carries Pyrrolidone carboxylic acid. 4 cysteine pairs are disulfide-bonded: Cys4/Cys51, Cys15/Cys36, Cys21/Cys45, and Cys25/Cys47. At Ser8 the chain carries Phosphoserine; by CPK.

As to quaternary structure, forms oligomers in its native state.

Its function is as follows. Possesses antifungal activity sensitive to inorganic cations. The sequence is that of Defensin-like protein 2A from Sinapis alba (White mustard).